We begin with the raw amino-acid sequence, 77 residues long: Small ribosomal subunit protein uS4 (77 aa).

Positions 45–77 (PFGGGRPGRVKRKNQKAAAKKASGGDGDEEDEE) are disordered. The segment covering 52-63 (GRVKRKNQKAAA) has biased composition (basic residues).

This sequence belongs to the universal ribosomal protein uS4 family.

This chain is Small ribosomal subunit protein uS4 (RPS9), found in Nicotiana tabacum (Common tobacco).